A 455-amino-acid chain; its full sequence is MGRVSSIISFSLTLLILFNGYTAQQWPNECQLDQLNALEPSQIIKSEGGRIEVWDHHAPQLRCSGFAFERFVIEPQGLFLPTFLNAGKLTFVVHGRGLMGRVIPGCAETFMESPVFGEGQGQGQSQGFRDMHQKVEHLRCGDTIATPSGVAQWFYNNGNEPLILVAAADLASNQNQLDRNLRPFLIAGNNPQGQEWLQGRKQQKQNNIFNGFAPEILAQAFKINVETAQQLQNQQDNRGNIVKVNGPFGVIRPPLRRGEGGQQPHEIANGLEETLCTMRCTENLDDPSDADVYKPSLGYISTLNSYNLPILRLLRLSALRGSIRKNAMVLPQWNVNANAALYVTNGKAHIQMVNDNGERVFDQEISSGQLLVVPQGFSVMKHAIGEQFEWIEFKTNENAQVNTLAGRTSVMRGLPLEVITNGYQISPEEAKRVKFSTIETTLTHSSPMSYGRPRA.

The first 24 residues, Met-1–Gln-24, serve as a signal peptide directing secretion. Disulfide bonds link Cys-30–Cys-63 and Cys-106–Cys-276. Cupin type-1 domains lie at Leu-35–Gln-229 and Glu-282–Lys-431. Thr-109 is modified (phosphothreonine). Phosphotyrosine is present on Tyr-299. Phosphoserine occurs at positions 301 and 367. A phosphothreonine mark is found at Thr-395 and Thr-420. Ser-436 carries the post-translational modification Phosphoserine.

It belongs to the 11S seed storage protein (globulins) family. As to quaternary structure, hexamer; each subunit is composed of an acidic and a basic chain derived from a single precursor and linked by a disulfide bond. Ubiquitinated. Post-translationally, proteolytically processed during seed maturation at a conserved Asn-Gly peptide bond by an asparaginyl endopeptidase to produce two mature polypeptides referred to as alpha and beta subunits that are joined together by a disulfide bond. In terms of processing, phosphorylated in seeds on some Tyr residues in response to abscisic acid (ABA). As to expression, accumulates in seeds 8 days after anthesis.

The protein localises to the protein storage vacuole. Functionally, seed storage protein. The protein is 12S seed storage protein CRB (CRB) of Arabidopsis thaliana (Mouse-ear cress).